A 72-amino-acid chain; its full sequence is Translation initiation factor IF-1 (72 aa).

One can recognise an S1-like domain in the interval 1–72; sequence MAKEEQIELE…TKGRITFRMK (72 aa).

This sequence belongs to the IF-1 family. In terms of assembly, component of the 30S ribosomal translation pre-initiation complex which assembles on the 30S ribosome in the order IF-2 and IF-3, IF-1 and N-formylmethionyl-tRNA(fMet); mRNA recruitment can occur at any time during PIC assembly.

Its subcellular location is the cytoplasm. In terms of biological role, one of the essential components for the initiation of protein synthesis. Stabilizes the binding of IF-2 and IF-3 on the 30S subunit to which N-formylmethionyl-tRNA(fMet) subsequently binds. Helps modulate mRNA selection, yielding the 30S pre-initiation complex (PIC). Upon addition of the 50S ribosomal subunit IF-1, IF-2 and IF-3 are released leaving the mature 70S translation initiation complex. The protein is Translation initiation factor IF-1 of Alcanivorax borkumensis (strain ATCC 700651 / DSM 11573 / NCIMB 13689 / SK2).